A 383-amino-acid polypeptide reads, in one-letter code: Trichodiene synthase (383 aa).

This sequence belongs to the trichodiene synthase family.

It catalyses the reaction (2E,6E)-farnesyl diphosphate = trichodiene + diphosphate. It functions in the pathway sesquiterpene biosynthesis; trichothecene biosynthesis. Functionally, TS is a member of the terpene cyclase group of enzymes. It catalyzes the isomerization and cyclization of farnesyl pyro-phosphate to form trichodiene, the first cyclic intermediate in the biosynthetic pathway for trichothecenes. It serves to branch trichothecene biosynthesis from the isoprenoid pathway. In Gibberella pulicaris, this protein is Trichodiene synthase (TRI5).